We begin with the raw amino-acid sequence, 484 residues long: Glutamyl-tRNA(Gln) amidotransferase subunit A (484 aa).

Residues K77 and S152 each act as charge relay system in the active site. S176 acts as the Acyl-ester intermediate in catalysis.

It belongs to the amidase family. GatA subfamily. As to quaternary structure, heterotrimer of A, B and C subunits.

The enzyme catalyses L-glutamyl-tRNA(Gln) + L-glutamine + ATP + H2O = L-glutaminyl-tRNA(Gln) + L-glutamate + ADP + phosphate + H(+). Functionally, allows the formation of correctly charged Gln-tRNA(Gln) through the transamidation of misacylated Glu-tRNA(Gln) in organisms which lack glutaminyl-tRNA synthetase. The reaction takes place in the presence of glutamine and ATP through an activated gamma-phospho-Glu-tRNA(Gln). This chain is Glutamyl-tRNA(Gln) amidotransferase subunit A, found in Lacticaseibacillus casei (strain BL23) (Lactobacillus casei).